Consider the following 294-residue polypeptide: Ribosomal RNA small subunit methyltransferase A (294 aa).

S-adenosyl-L-methionine contacts are provided by N31, L33, G58, E79, D104, and N129.

Belongs to the class I-like SAM-binding methyltransferase superfamily. rRNA adenine N(6)-methyltransferase family. RsmA subfamily.

It localises to the cytoplasm. It catalyses the reaction adenosine(1518)/adenosine(1519) in 16S rRNA + 4 S-adenosyl-L-methionine = N(6)-dimethyladenosine(1518)/N(6)-dimethyladenosine(1519) in 16S rRNA + 4 S-adenosyl-L-homocysteine + 4 H(+). Its function is as follows. Specifically dimethylates two adjacent adenosines (A1518 and A1519) in the loop of a conserved hairpin near the 3'-end of 16S rRNA in the 30S particle. May play a critical role in biogenesis of 30S subunits. This is Ribosomal RNA small subunit methyltransferase A from Oceanobacillus iheyensis (strain DSM 14371 / CIP 107618 / JCM 11309 / KCTC 3954 / HTE831).